Consider the following 491-residue polypeptide: Probable glycine dehydrogenase (decarboxylating) subunit 2 (491 aa).

Lys273 carries the post-translational modification N6-(pyridoxal phosphate)lysine.

Belongs to the GcvP family. C-terminal subunit subfamily. The glycine cleavage system is composed of four proteins: P, T, L and H. In this organism, the P 'protein' is a heterodimer of two subunits. Requires pyridoxal 5'-phosphate as cofactor.

The catalysed reaction is N(6)-[(R)-lipoyl]-L-lysyl-[glycine-cleavage complex H protein] + glycine + H(+) = N(6)-[(R)-S(8)-aminomethyldihydrolipoyl]-L-lysyl-[glycine-cleavage complex H protein] + CO2. Its function is as follows. The glycine cleavage system catalyzes the degradation of glycine. The P protein binds the alpha-amino group of glycine through its pyridoxal phosphate cofactor; CO(2) is released and the remaining methylamine moiety is then transferred to the lipoamide cofactor of the H protein. In Bacillus anthracis (strain A0248), this protein is Probable glycine dehydrogenase (decarboxylating) subunit 2.